Reading from the N-terminus, the 362-residue chain is tRNA-specific 2-thiouridylase MnmA (362 aa).

ATP is bound by residues 13–20 and methionine 39; that span reads GLSGGVDS. Residues 99 to 101 are interaction with target base in tRNA; the sequence is NPD. Residue cysteine 104 is the Nucleophile of the active site. Cysteines 104 and 200 form a disulfide. Glycine 128 contacts ATP. Positions 150 to 152 are interaction with tRNA; the sequence is KDQ. Catalysis depends on cysteine 200, which acts as the Cysteine persulfide intermediate.

This sequence belongs to the MnmA/TRMU family.

The protein localises to the cytoplasm. It catalyses the reaction S-sulfanyl-L-cysteinyl-[protein] + uridine(34) in tRNA + AH2 + ATP = 2-thiouridine(34) in tRNA + L-cysteinyl-[protein] + A + AMP + diphosphate + H(+). Functionally, catalyzes the 2-thiolation of uridine at the wobble position (U34) of tRNA, leading to the formation of s(2)U34. The polypeptide is tRNA-specific 2-thiouridylase MnmA (Coxiella burnetii (strain Dugway 5J108-111)).